Here is a 342-residue protein sequence, read N- to C-terminus: N-acetyl-gamma-glutamyl-phosphate reductase (342 aa).

Cys146 is a catalytic residue.

Belongs to the NAGSA dehydrogenase family. Type 1 subfamily.

Its subcellular location is the cytoplasm. It carries out the reaction N-acetyl-L-glutamate 5-semialdehyde + phosphate + NADP(+) = N-acetyl-L-glutamyl 5-phosphate + NADPH + H(+). It participates in amino-acid biosynthesis; L-arginine biosynthesis; N(2)-acetyl-L-ornithine from L-glutamate: step 3/4. Functionally, catalyzes the NADPH-dependent reduction of N-acetyl-5-glutamyl phosphate to yield N-acetyl-L-glutamate 5-semialdehyde. The protein is N-acetyl-gamma-glutamyl-phosphate reductase of Frankia casuarinae (strain DSM 45818 / CECT 9043 / HFP020203 / CcI3).